Consider the following 492-residue polypeptide: UDP-N-acetylmuramoyl-L-alanyl-D-glutamate--2,6-diaminopimelate ligase (492 aa).

Serine 30 is a UDP-N-acetyl-alpha-D-muramoyl-L-alanyl-D-glutamate binding site. Residue 114–120 (GTNGKTS) participates in ATP binding. UDP-N-acetyl-alpha-D-muramoyl-L-alanyl-D-glutamate contacts are provided by residues 156 to 157 (TT), serine 183, glutamine 189, and arginine 191. Lysine 223 carries the N6-carboxylysine modification. Meso-2,6-diaminopimelate-binding positions include arginine 389, 413-416 (DNPR), glycine 462, and glutamate 466. A Meso-diaminopimelate recognition motif motif is present at residues 413-416 (DNPR).

The protein belongs to the MurCDEF family. MurE subfamily. Mg(2+) serves as cofactor. Post-translationally, carboxylation is probably crucial for Mg(2+) binding and, consequently, for the gamma-phosphate positioning of ATP.

The protein localises to the cytoplasm. It carries out the reaction UDP-N-acetyl-alpha-D-muramoyl-L-alanyl-D-glutamate + meso-2,6-diaminopimelate + ATP = UDP-N-acetyl-alpha-D-muramoyl-L-alanyl-gamma-D-glutamyl-meso-2,6-diaminopimelate + ADP + phosphate + H(+). It functions in the pathway cell wall biogenesis; peptidoglycan biosynthesis. Its function is as follows. Catalyzes the addition of meso-diaminopimelic acid to the nucleotide precursor UDP-N-acetylmuramoyl-L-alanyl-D-glutamate (UMAG) in the biosynthesis of bacterial cell-wall peptidoglycan. The protein is UDP-N-acetylmuramoyl-L-alanyl-D-glutamate--2,6-diaminopimelate ligase of Neisseria meningitidis serogroup B (strain ATCC BAA-335 / MC58).